Reading from the N-terminus, the 539-residue chain is MQLTELSIRSQNLFIRDYIEEKKEMTTFFDYDIHSEHTWKKRYDDLMKMSFPREALADYMSAYHAKFESAAMRQNIEKIRDKRSVMVVGGQQAGLLTGPLYTIHKIISIIQFAKEKETELGVPVIPVFWVAGEDHDVDEINFVYTSGEKGPVKQKLSLHNVKKAAAKRIPLDQEKTEIWLRDVFSTYEESAYTNDLLVQLLRCLRKSQTFTDFFEWIVCDLFEEDGLLLFNSGDLGVKPLERTLFKHIVETNDEVTNRLNESQAAMKRAGYQPIIEAGDNQANLFYEYDEERFLIEKENGRFFISEVGLTWTKEELLKEVEEHPERFSNNVVTRPLMQETLLPTLAFMAGHGEVNYWGELKGIFEHFHLKMAPVLPRLHVTILERHIDKKLPVRELSVEEVLTNGVKEKKDAHFQQSLPDSFVQAVEHAKRELANAHGVMRQEALEIEPNFEQLLDKNAKFIEDQLQFVYQKVAQRVEEKEGYILRDFERIENSLKPLDAPQERIWNIMYFLNKYGPEFFKTFKNLPFSFQNKQQIVKL.

Residues 249-270 (VETNDEVTNRLNESQAAMKRAG) are a coiled coil.

The protein belongs to the BshC family.

Its function is as follows. Involved in bacillithiol (BSH) biosynthesis. May catalyze the last step of the pathway, the addition of cysteine to glucosamine malate (GlcN-Mal) to generate BSH. This chain is Putative cysteine ligase BshC, found in Bacillus pumilus (strain SAFR-032).